The primary structure comprises 92 residues: Small ribosomal subunit protein uS19c (92 aa).

It belongs to the universal ribosomal protein uS19 family.

Its subcellular location is the plastid. The protein localises to the chloroplast. Protein S19 forms a complex with S13 that binds strongly to the 16S ribosomal RNA. This chain is Small ribosomal subunit protein uS19c, found in Draba nemorosa (Woodland whitlowgrass).